Consider the following 430-residue polypeptide: Serine--tRNA ligase (430 aa).

237 to 239 (TAE) is a binding site for L-serine. Residue 268–270 (RSE) coordinates ATP. L-serine is bound at residue Glu291. 355-358 (EISS) contributes to the ATP binding site. Ser391 provides a ligand contact to L-serine.

The protein belongs to the class-II aminoacyl-tRNA synthetase family. Type-1 seryl-tRNA synthetase subfamily. As to quaternary structure, homodimer. The tRNA molecule binds across the dimer.

It is found in the cytoplasm. It carries out the reaction tRNA(Ser) + L-serine + ATP = L-seryl-tRNA(Ser) + AMP + diphosphate + H(+). The enzyme catalyses tRNA(Sec) + L-serine + ATP = L-seryl-tRNA(Sec) + AMP + diphosphate + H(+). It participates in aminoacyl-tRNA biosynthesis; selenocysteinyl-tRNA(Sec) biosynthesis; L-seryl-tRNA(Sec) from L-serine and tRNA(Sec): step 1/1. In terms of biological role, catalyzes the attachment of serine to tRNA(Ser). Is also able to aminoacylate tRNA(Sec) with serine, to form the misacylated tRNA L-seryl-tRNA(Sec), which will be further converted into selenocysteinyl-tRNA(Sec). This Shigella boydii serotype 18 (strain CDC 3083-94 / BS512) protein is Serine--tRNA ligase.